Here is a 359-residue protein sequence, read N- to C-terminus: tRNA-specific 2-thiouridylase MnmA (359 aa).

ATP-binding positions include 7–14 (AMSGGVDS) and Met-33. Cys-101 (nucleophile) is an active-site residue. Cys-101 and Cys-198 are disulfide-bonded. Gly-125 is an ATP binding site. Positions 148–150 (KDQ) are interaction with tRNA. Catalysis depends on Cys-198, which acts as the Cysteine persulfide intermediate.

The protein belongs to the MnmA/TRMU family.

It is found in the cytoplasm. The catalysed reaction is S-sulfanyl-L-cysteinyl-[protein] + uridine(34) in tRNA + AH2 + ATP = 2-thiouridine(34) in tRNA + L-cysteinyl-[protein] + A + AMP + diphosphate + H(+). In terms of biological role, catalyzes the 2-thiolation of uridine at the wobble position (U34) of tRNA, leading to the formation of s(2)U34. The polypeptide is tRNA-specific 2-thiouridylase MnmA (Chloroflexus aggregans (strain MD-66 / DSM 9485)).